The sequence spans 353 residues: Photosystem II D2 protein (353 aa).

An N-acetylthreonine modification is found at T2. At T2 the chain carries Phosphothreonine. Residues 41-61 traverse the membrane as a helical segment; that stretch reads CAYFSLGGWLTGTTFVTSWYT. H118 provides a ligand contact to chlorophyll a. The chain crosses the membrane as a helical span at residues 125–141; that stretch reads GFMLRQFELARSVQLRP. 2 residues coordinate pheophytin a: Q130 and N143. Residues 153-166 traverse the membrane as a helical segment; that stretch reads VFVSVFLIYPLGQS. Chlorophyll a is bound at residue H198. Residues 208–228 form a helical membrane-spanning segment; that stretch reads AALLCAIHGATVENTLFEDGD. 2 residues coordinate a plastoquinone: H215 and F262. A Fe cation-binding site is contributed by H215. H269 serves as a coordination point for Fe cation. A helical membrane pass occupies residues 279-295; that stretch reads GLWMSAIGVVGLALNLR.

The protein belongs to the reaction center PufL/M/PsbA/D family. PSII is composed of 1 copy each of membrane proteins PsbA, PsbB, PsbC, PsbD, PsbE, PsbF, PsbH, PsbI, PsbJ, PsbK, PsbL, PsbM, PsbT, PsbX, PsbY, PsbZ, Psb30/Ycf12, at least 3 peripheral proteins of the oxygen-evolving complex and a large number of cofactors. It forms dimeric complexes. Requires The D1/D2 heterodimer binds P680, chlorophylls that are the primary electron donor of PSII, and subsequent electron acceptors. It shares a non-heme iron and each subunit binds pheophytin, quinone, additional chlorophylls, carotenoids and lipids. There is also a Cl(-1) ion associated with D1 and D2, which is required for oxygen evolution. The PSII complex binds additional chlorophylls, carotenoids and specific lipids. as cofactor.

It localises to the plastid. The protein resides in the chloroplast thylakoid membrane. The enzyme catalyses 2 a plastoquinone + 4 hnu + 2 H2O = 2 a plastoquinol + O2. Functionally, photosystem II (PSII) is a light-driven water:plastoquinone oxidoreductase that uses light energy to abstract electrons from H(2)O, generating O(2) and a proton gradient subsequently used for ATP formation. It consists of a core antenna complex that captures photons, and an electron transfer chain that converts photonic excitation into a charge separation. The D1/D2 (PsbA/PsbD) reaction center heterodimer binds P680, the primary electron donor of PSII as well as several subsequent electron acceptors. D2 is needed for assembly of a stable PSII complex. The chain is Photosystem II D2 protein from Chara vulgaris (Common stonewort).